A 71-amino-acid chain; its full sequence is Translation initiation factor IF-1 (71 aa).

The 71-residue stretch at methionine 1 to histidine 71 folds into the S1-like domain.

The protein belongs to the IF-1 family. In terms of assembly, component of the 30S ribosomal translation pre-initiation complex which assembles on the 30S ribosome in the order IF-2 and IF-3, IF-1 and N-formylmethionyl-tRNA(fMet); mRNA recruitment can occur at any time during PIC assembly.

The protein resides in the cytoplasm. Functionally, one of the essential components for the initiation of protein synthesis. Stabilizes the binding of IF-2 and IF-3 on the 30S subunit to which N-formylmethionyl-tRNA(fMet) subsequently binds. Helps modulate mRNA selection, yielding the 30S pre-initiation complex (PIC). Upon addition of the 50S ribosomal subunit IF-1, IF-2 and IF-3 are released leaving the mature 70S translation initiation complex. The protein is Translation initiation factor IF-1 of Rickettsia typhi (strain ATCC VR-144 / Wilmington).